A 418-amino-acid chain; its full sequence is Serine protease inhibitor A3M (418 aa).

The signal sequence occupies residues 1–20; the sequence is MAFIAALGILMAGICPTVLC. Residues asparagine 104, asparagine 184, and asparagine 269 are each glycosylated (N-linked (GlcNAc...) asparagine). An RCL region spans residues 367–392; the sequence is GTEAAAATGFIFGFRSRRLQTMTVQF.

Belongs to the serpin family. As to expression, expressed in liver and testis.

The protein resides in the secreted. The sequence is that of Serine protease inhibitor A3M (Serpina3m) from Mus musculus (Mouse).